Consider the following 645-residue polypeptide: Putative galactocerebrosidase (645 aa).

Positions 1–16 (MFSIFIKIILILPSIA) are cleaved as a signal peptide. Substrate contacts are provided by Thr87 and Trp128. N-linked (GlcNAc...) asparagine glycosylation is present at Asn141. Asn171 contributes to the substrate binding site. The active-site Proton donor/acceptor is Glu172. N-linked (GlcNAc...) asparagine glycosylation is found at Asn174 and Asn193. Glu248 serves as the catalytic Nucleophile. Cys261 and Cys365 are joined by a disulfide. 7 N-linked (GlcNAc...) asparagine glycosylation sites follow: Asn274, Asn395, Asn411, Asn532, Asn616, Asn620, and Asn638.

The protein belongs to the glycosyl hydrolase 59 family.

The enzyme catalyses a beta-D-Gal-(1&lt;-&gt;1')-ceramide + H2O = an N-acyl-sphingoid base + D-galactose. It catalyses the reaction a beta-D-galactosyl-(1&lt;-&gt;1')-N-acylsphing-4-enine + H2O = an N-acylsphing-4-enine + D-galactose. In terms of biological role, hydrolyzes the galactose ester bonds of galactosylceramide, galactosylsphingoid base, lactosylceramide, and monogalactosyldiglyceride. C.elegans contain specific sphingoid bases, which are unique or different in structure compared to the sphingoid bases found in other animals. Two examples of these distinctive compounds are: 15-methylhexadecasphinganine and 15-methylhexadecasphing-4-enine. The protein is Putative galactocerebrosidase of Caenorhabditis elegans.